The chain runs to 512 residues: SWI/SNF complex subunit SWI3A (512 aa).

An SWIRM domain is found at 13–110; that stretch reads YTIPAQSSWF…FSSSLKKNDH (98 aa). The region spanning 223 to 274 is the SANT domain; the sequence is SAAAVWTEEEILLLLESVLKHGDDWELISQSVSTKSRLDCISKLIELPFGEF. Residues 291–325 are disordered; that stretch reads DENTEQVQTDGQEHEETETREEKEDRVNEDEPPAK. Residues 424–488 are a coiled coil; the sequence is ALGAAAAQAK…IEGVKETIIQ (65 aa).

Homodimers and heterodimers. Interacts with SWI3B, SWI3C, BSH, and the C-terminus of FCA, but not with BRM or SWI3D. Expressed in roots, stems, leaves and flowers, but not in siliques.

The protein resides in the nucleus. Functionally, component of a multiprotein complex equivalent of the SWI/SNF complex, an ATP-dependent chromatin-remodeling complex, which is required for the positive and negative regulation of gene expression of a large number of genes. It changes chromatin structure by altering DNA-histone contacts within a nucleosome, leading eventually to a change in nucleosome position, thus facilitating or repressing binding of gene-specific transcription factors. The protein is SWI/SNF complex subunit SWI3A (SWI3A) of Arabidopsis thaliana (Mouse-ear cress).